A 319-amino-acid chain; its full sequence is Acetyl-coenzyme A carboxylase carboxyl transferase subunit alpha (319 aa).

Residues 39–293 enclose the CoA carboxyltransferase C-terminal domain; it reads RLQKKSNDLT…KAVLEKQLHE (255 aa).

This sequence belongs to the AccA family. As to quaternary structure, acetyl-CoA carboxylase is a heterohexamer composed of biotin carboxyl carrier protein (AccB), biotin carboxylase (AccC) and two subunits each of ACCase subunit alpha (AccA) and ACCase subunit beta (AccD).

The protein localises to the cytoplasm. It carries out the reaction N(6)-carboxybiotinyl-L-lysyl-[protein] + acetyl-CoA = N(6)-biotinyl-L-lysyl-[protein] + malonyl-CoA. The protein operates within lipid metabolism; malonyl-CoA biosynthesis; malonyl-CoA from acetyl-CoA: step 1/1. Functionally, component of the acetyl coenzyme A carboxylase (ACC) complex. First, biotin carboxylase catalyzes the carboxylation of biotin on its carrier protein (BCCP) and then the CO(2) group is transferred by the carboxyltransferase to acetyl-CoA to form malonyl-CoA. This Neisseria gonorrhoeae (strain ATCC 700825 / FA 1090) protein is Acetyl-coenzyme A carboxylase carboxyl transferase subunit alpha.